The sequence spans 138 residues: Small ribosomal subunit protein uS11c (138 aa).

The tract at residues 1–23 (MAKPIPRIGSRRNGRISSRKSTR) is disordered. Positions 9–23 (GSRRNGRISSRKSTR) are enriched in basic residues.

Belongs to the universal ribosomal protein uS11 family. Part of the 30S ribosomal subunit.

It localises to the plastid. The protein resides in the chloroplast. The sequence is that of Small ribosomal subunit protein uS11c from Cucumis sativus (Cucumber).